Reading from the N-terminus, the 144-residue chain is Eukaryotic translation initiation factor 1A, X-chromosomal (144 aa).

The segment covering 1 to 15 (MPKNKGKGGKNRRRG) has biased composition (basic residues). 2 disordered regions span residues 1 to 26 (MPKNKGKGGKNRRRGKNENESEKREL) and 114 to 144 (KINETDTFGPGDDDEIQFDDIGDDDEDIDDI). Residues 16–26 (KNENESEKREL) are compositionally biased toward basic and acidic residues. The S1-like domain maps to 22–96 (EKRELVFKED…NKADVILKYN (75 aa)). The segment covering 124–144 (GDDDEIQFDDIGDDDEDIDDI) has biased composition (acidic residues).

This sequence belongs to the eIF-1A family. Component of the 43S pre-initiation complex (43S PIC), which is composed of the 40S ribosomal subunit, EIF1, eIF1A (EIF1AX), eIF3 complex, EIF5 and eIF2-GTP-initiator tRNA complex (eIF2 ternary complex). Interacts with EIF5; this interaction contributes to the maintenance of EIF1 within the open 43S PIC. Interacts through its C-terminal domain (CTD) with the CTD of EIF5B; from the location of the start codon by the 43S complex until the formation of the 80S complex. As to quaternary structure, (Microbial infection) Interacts with human respiratory syncytial virus (HRSV) nucleoprotein; this interaction recruits EIF1AX to the viral replication complex to facilitate viral genomic RNA synthesis and virus production.

Its subcellular location is the cytoplasm. In terms of biological role, component of the 43S pre-initiation complex (43S PIC), which binds to the mRNA cap-proximal region, scans mRNA 5'-untranslated region, and locates the initiation codon. This protein enhances formation of the cap-proximal complex. Together with EIF1, facilitates scanning, start codon recognition, promotion of the assembly of 48S complex at the initiation codon (43S PIC becomes 48S PIC after the start codon is reached), and dissociation of aberrant complexes. After start codon location, together with EIF5B orients the initiator methionine-tRNA in a conformation that allows 60S ribosomal subunit joining to form the 80S initiation complex. Is released after 80S initiation complex formation, just after GTP hydrolysis by EIF5B, and before release of EIF5B. Its globular part is located in the A site of the 40S ribosomal subunit. Its interaction with EIF5 during scanning contribute to the maintenance of EIF1 within the open 43S PIC. In contrast to yeast orthologs, does not bind EIF1. This chain is Eukaryotic translation initiation factor 1A, X-chromosomal (EIF1AX), found in Homo sapiens (Human).